A 597-amino-acid polypeptide reads, in one-letter code: FERM domain-containing protein 3 (597 aa).

The 281-residue stretch at 32 to 312 folds into the FERM domain; sequence MRCTIRLLDD…ENQAFYKYAK (281 aa). Residues 383-403 are disordered; that stretch reads LLPSPSEQEEELPLGEGVPLP. A helical membrane pass occupies residues 531–551; it reads LLVVGLGLLLFVFPLLLLLLE.

As to expression, ovary-specific.

The protein resides in the membrane. Functionally, putative tumor suppressor gene that may be implicated in the origin and progression of lung cancer. The chain is FERM domain-containing protein 3 (FRMD3) from Homo sapiens (Human).